A 325-amino-acid polypeptide reads, in one-letter code: Lipoyl synthase (325 aa).

The [4Fe-4S] cluster site is built by C66, C71, C77, C92, C96, C99, and S303. The Radical SAM core domain occupies 78 to 292 (WEDREATFLI…AQFAEGLGFA (215 aa)).

The protein belongs to the radical SAM superfamily. Lipoyl synthase family. The cofactor is [4Fe-4S] cluster.

It localises to the cytoplasm. It catalyses the reaction [[Fe-S] cluster scaffold protein carrying a second [4Fe-4S](2+) cluster] + N(6)-octanoyl-L-lysyl-[protein] + 2 oxidized [2Fe-2S]-[ferredoxin] + 2 S-adenosyl-L-methionine + 4 H(+) = [[Fe-S] cluster scaffold protein] + N(6)-[(R)-dihydrolipoyl]-L-lysyl-[protein] + 4 Fe(3+) + 2 hydrogen sulfide + 2 5'-deoxyadenosine + 2 L-methionine + 2 reduced [2Fe-2S]-[ferredoxin]. Its pathway is protein modification; protein lipoylation via endogenous pathway; protein N(6)-(lipoyl)lysine from octanoyl-[acyl-carrier-protein]: step 2/2. Its function is as follows. Catalyzes the radical-mediated insertion of two sulfur atoms into the C-6 and C-8 positions of the octanoyl moiety bound to the lipoyl domains of lipoate-dependent enzymes, thereby converting the octanoylated domains into lipoylated derivatives. The polypeptide is Lipoyl synthase (Mycobacterium sp. (strain JLS)).